Reading from the N-terminus, the 324-residue chain is tRNA U34 carboxymethyltransferase (324 aa).

Carboxy-S-adenosyl-L-methionine is bound by residues lysine 92, tryptophan 106, lysine 111, glycine 131, 153–155 (DPT), 181–182 (IE), methionine 197, tyrosine 201, and arginine 316.

It belongs to the class I-like SAM-binding methyltransferase superfamily. CmoB family. As to quaternary structure, homotetramer.

The enzyme catalyses carboxy-S-adenosyl-L-methionine + 5-hydroxyuridine(34) in tRNA = 5-carboxymethoxyuridine(34) in tRNA + S-adenosyl-L-homocysteine + H(+). Functionally, catalyzes carboxymethyl transfer from carboxy-S-adenosyl-L-methionine (Cx-SAM) to 5-hydroxyuridine (ho5U) to form 5-carboxymethoxyuridine (cmo5U) at position 34 in tRNAs. The protein is tRNA U34 carboxymethyltransferase of Methylococcus capsulatus (strain ATCC 33009 / NCIMB 11132 / Bath).